Reading from the N-terminus, the 296-residue chain is Probable 6-phosphogluconolactonase 1 (296 aa).

Belongs to the glucosamine/galactosamine-6-phosphate isomerase family. 6-phosphogluconolactonase subfamily.

It catalyses the reaction 6-phospho-D-glucono-1,5-lactone + H2O = 6-phospho-D-gluconate + H(+). It functions in the pathway carbohydrate degradation; pentose phosphate pathway; D-ribulose 5-phosphate from D-glucose 6-phosphate (oxidative stage): step 2/3. Its function is as follows. Hydrolysis of 6-phosphogluconolactone to 6-phosphogluconate. This Oryza sativa subsp. japonica (Rice) protein is Probable 6-phosphogluconolactonase 1.